The chain runs to 60 residues: Large ribosomal subunit protein bL32 (60 aa).

The span at 1-16 (MAVPRRKTSPSRRGMR) shows a compositional bias: basic residues. The interval 1 to 60 (MAVPRRKTSPSRRGMRRSADAIKKPTYAEDKDSGELRRPHHLDLKTGMYKGRQVLIKKES) is disordered. Residues 17-44 (RSADAIKKPTYAEDKDSGELRRPHHLDL) are compositionally biased toward basic and acidic residues.

It belongs to the bacterial ribosomal protein bL32 family.

The polypeptide is Large ribosomal subunit protein bL32 (Rhodopseudomonas palustris (strain BisA53)).